The following is a 696-amino-acid chain: DNA ligase (696 aa).

NAD(+) contacts are provided by residues 36–40, 85–86, and Glu123; these read DAEYD and SL. Catalysis depends on Lys125, which acts as the N6-AMP-lysine intermediate. Arg146, Glu181, Lys319, and Lys343 together coordinate NAD(+). Cys437, Cys440, Cys455, and Cys461 together coordinate Zn(2+). Residues 618–696 form the BRCT domain; it reads PEGTSLAGKT…EDGLKALLGL (79 aa).

It belongs to the NAD-dependent DNA ligase family. LigA subfamily. The cofactor is Mg(2+). It depends on Mn(2+) as a cofactor.

It catalyses the reaction NAD(+) + (deoxyribonucleotide)n-3'-hydroxyl + 5'-phospho-(deoxyribonucleotide)m = (deoxyribonucleotide)n+m + AMP + beta-nicotinamide D-nucleotide.. In terms of biological role, DNA ligase that catalyzes the formation of phosphodiester linkages between 5'-phosphoryl and 3'-hydroxyl groups in double-stranded DNA using NAD as a coenzyme and as the energy source for the reaction. It is essential for DNA replication and repair of damaged DNA. The polypeptide is DNA ligase (Bordetella pertussis (strain Tohama I / ATCC BAA-589 / NCTC 13251)).